Here is a 140-residue protein sequence, read N- to C-terminus: Nucleoside diphosphate kinase (140 aa).

ATP is bound by residues K11, F59, R87, T93, R104, and N114. The active-site Pros-phosphohistidine intermediate is H117.

Belongs to the NDK family. In terms of assembly, homotetramer. It depends on Mg(2+) as a cofactor.

The protein resides in the cytoplasm. It carries out the reaction a 2'-deoxyribonucleoside 5'-diphosphate + ATP = a 2'-deoxyribonucleoside 5'-triphosphate + ADP. The catalysed reaction is a ribonucleoside 5'-diphosphate + ATP = a ribonucleoside 5'-triphosphate + ADP. Major role in the synthesis of nucleoside triphosphates other than ATP. The ATP gamma phosphate is transferred to the NDP beta phosphate via a ping-pong mechanism, using a phosphorylated active-site intermediate. In Gluconobacter oxydans (strain 621H) (Gluconobacter suboxydans), this protein is Nucleoside diphosphate kinase.